A 416-amino-acid chain; its full sequence is Putative serine protease HhoB (416 aa).

The first 25 residues, 1-25, serve as a signal peptide directing secretion; sequence MAIHLKASHLGVAVLLLLFGGAIGA. The segment covering 35–53 has biased composition (polar residues); sequence GQNHSSPDSPVNTSPQSLT. Residues 35–57 are disordered; the sequence is GQNHSSPDSPVNTSPQSLTPAPV. Residues 320 to 398 enclose the PDZ domain; it reads EMTKQLRTSG…PLAIAVKRGQ (79 aa).

Belongs to the peptidase S1C family.

Its function is as follows. A putative protease, its function overlaps that of the related putative proteases HtrA and HhoA. This Synechocystis sp. (strain ATCC 27184 / PCC 6803 / Kazusa) protein is Putative serine protease HhoB (hhoB).